The chain runs to 315 residues: Small ribosomal subunit protein uS3 (315 aa).

Positions 38 to 106 (IRKMMSRGME…QVQLNILEVK (69 aa)) constitute a KH type-2 domain. A disordered region spans residues 211–315 (AEREAQEALQ…VANTPEKAEE (105 aa)). Positions 222–232 (QTRRERPRRGP) are enriched in basic residues. Residues 265 to 315 (APAETPAGEAAATEPTAPVAEPATAAASAPAEAASAPAEAAVANTPEKAEE) are compositionally biased toward low complexity.

Belongs to the universal ribosomal protein uS3 family. As to quaternary structure, part of the 30S ribosomal subunit. Forms a tight complex with proteins S10 and S14.

Binds the lower part of the 30S subunit head. Binds mRNA in the 70S ribosome, positioning it for translation. The sequence is that of Small ribosomal subunit protein uS3 from Frankia casuarinae (strain DSM 45818 / CECT 9043 / HFP020203 / CcI3).